We begin with the raw amino-acid sequence, 372 residues long: N-methyl-L-tryptophan oxidase (372 aa).

4-34 (DLIIIGSGSVGAAAGYYATRAGLKVLMTDAH) lines the FAD pocket. Cysteine 307 carries the post-translational modification S-8alpha-FAD cysteine.

The protein belongs to the MSOX/MTOX family. MTOX subfamily. In terms of assembly, monomer. Requires FAD as cofactor.

The enzyme catalyses N(alpha)-methyl-L-tryptophan + O2 + H2O = L-tryptophan + formaldehyde + H2O2. Functionally, catalyzes the oxidative demethylation of N-methyl-L-tryptophan. The protein is N-methyl-L-tryptophan oxidase of Salmonella arizonae (strain ATCC BAA-731 / CDC346-86 / RSK2980).